Reading from the N-terminus, the 310-residue chain is Ribosomal RNA small subunit methyltransferase H (310 aa).

S-adenosyl-L-methionine is bound by residues 47-49 (GGH), aspartate 66, phenylalanine 93, aspartate 108, and glutamine 115.

This sequence belongs to the methyltransferase superfamily. RsmH family.

It is found in the cytoplasm. It catalyses the reaction cytidine(1402) in 16S rRNA + S-adenosyl-L-methionine = N(4)-methylcytidine(1402) in 16S rRNA + S-adenosyl-L-homocysteine + H(+). Functionally, specifically methylates the N4 position of cytidine in position 1402 (C1402) of 16S rRNA. This is Ribosomal RNA small subunit methyltransferase H from Prochlorococcus marinus (strain MIT 9303).